A 382-amino-acid chain; its full sequence is tRNA (guanine-N(7)-)-methyltransferase non-catalytic subunit wuho (382 aa).

The tract at residues 40–59 (VKDTDAGNEPNGNQTQPTPA) is disordered. Over residues 49–59 (PNGNQTQPTPA) the composition is skewed to polar residues. 2 WD repeats span residues 149–190 (GHMS…ECFC) and 192–230 (GHTEYVGGIEIIPSEKLISVSGDRTLRLWDVTEGKELSK).

The protein belongs to the WD repeat TRM82 family. In terms of assembly, forms a heterodimer with the catalytic subunit.

It localises to the nucleus. It participates in tRNA modification; N(7)-methylguanine-tRNA biosynthesis. In terms of biological role, required for the formation of N(7)-methylguanine at position 46 (m7G46) in tRNA. In the complex, it is required to stabilize and induce conformational changes of the catalytic subunit. The protein is tRNA (guanine-N(7)-)-methyltransferase non-catalytic subunit wuho of Anopheles gambiae (African malaria mosquito).